The sequence spans 313 residues: Ribosomal RNA small subunit methyltransferase H (313 aa).

Residues 33-35 (AGH), Asp53, Phe82, Asp103, and Gln110 contribute to the S-adenosyl-L-methionine site.

The protein belongs to the methyltransferase superfamily. RsmH family.

It is found in the cytoplasm. It carries out the reaction cytidine(1402) in 16S rRNA + S-adenosyl-L-methionine = N(4)-methylcytidine(1402) in 16S rRNA + S-adenosyl-L-homocysteine + H(+). Specifically methylates the N4 position of cytidine in position 1402 (C1402) of 16S rRNA. The protein is Ribosomal RNA small subunit methyltransferase H of Acetivibrio thermocellus (strain ATCC 27405 / DSM 1237 / JCM 9322 / NBRC 103400 / NCIMB 10682 / NRRL B-4536 / VPI 7372) (Clostridium thermocellum).